The following is a 177-amino-acid chain: Large ribosomal subunit protein uL6 (177 aa).

Belongs to the universal ribosomal protein uL6 family. Part of the 50S ribosomal subunit.

This protein binds to the 23S rRNA, and is important in its secondary structure. It is located near the subunit interface in the base of the L7/L12 stalk, and near the tRNA binding site of the peptidyltransferase center. The sequence is that of Large ribosomal subunit protein uL6 from Vibrio atlanticus (strain LGP32) (Vibrio splendidus (strain Mel32)).